Here is a 335-residue protein sequence, read N- to C-terminus: DNA-directed RNA polymerase RPB7 homolog (335 aa).

The protein belongs to the Asfivirus DNA-directed RNA polymerase RPB7 homolog family. In terms of assembly, part of the viral DNA-directed RNA polymerase that consists of 8 polII-like subunits (RPB1, RPB2, RPB3, RPB5, RPB6, RPB7, RPB9, RPB10), a capping enzyme and a termination factor.

Its subcellular location is the host cytoplasm. It is found in the virion. In terms of biological role, component of the DNA-directed RNA polymerase (RNAP) that catalyzes the transcription in the cytoplasm of viral DNA into RNA using the four ribonucleoside triphosphates as substrates. This African swine fever virus (isolate Pig/Kenya/KEN-50/1950) (ASFV) protein is DNA-directed RNA polymerase RPB7 homolog.